The following is a 397-amino-acid chain: Sporulation-specific protein 20 (397 aa).

Residues Met-1–Leu-26 are disordered. Residues Arg-4–Arg-50 are inhibitory region. Residues Lys-10–Leu-26 are compositionally biased toward basic residues. The positive regulatory region stretch occupies residues Met-51–Cys-95. Residues Asn-330–Val-392 enclose the t-SNARE coiled-coil homology domain.

This sequence belongs to the SNAP-25 family. Interacts with the t-SNARE SSO1 and the v-SNARE SNC2.

It localises to the cell membrane. The protein resides in the prospore membrane. Functionally, required to maintain the prospore membrane to the nucleus during sporulation in order to capture the daughter nuclei and form the spores. Mediates the fusion of exocytic vesicles with the plasma membrane during sporulation through its interactions with the t-SNARE SSO1 and v-SNARE SNC2. In Saccharomyces cerevisiae (strain ATCC 204508 / S288c) (Baker's yeast), this protein is Sporulation-specific protein 20 (SPO20).